A 637-amino-acid polypeptide reads, in one-letter code: MWRVCVRRAQSAVPRAGLGDRWAVLKDGPVAPCGSSRAGPGAARFSSGTPSYGVRFLCGWSSGSDTAPRNRLLRQLLGSPGRRSYSLPPHQKVPLPSLSPTMQAGTIARWEKKEGEKINEGDLIAEVETDKATVGFESLEECYMAKILVAEGTRDIPIGSIICITVGKPEDIEAFKNYTLDSAAATTPQAAAPTPAPAPCAAPTAPSAKAPGSSYPPHMQVSAVGEQRLESWKLRLGVHLSERPCLKEIRETAQDSFEVQEEGYLAKILIPEGTRDVPLGAPLCIIVEKQEDIAAFADYRPMEVTSLKPQAPPPVPPPVAAAPPTAQPLAPTPSGLPAGPKGRVFVSPLAKKLAAERGIDLTQVKGTGPEGRIIKKDIDSFVPSKAAPAPAAAMAPPGPRVAPAPAAGVFTDVPISNIRRVIAQRLMQSKQTIPHYYLSIDVNMGEVLLVRKELNKMLEGKGKISVNDFIIKASALACLKVPEANSSWMDTVIRQNHVVDVSVAVSTPAGLITPIVFNAHIKGLETIASDVVSLASKAREGKLQPHEFQGGTFTISNLGMFGIKNFSAIINPPQACILAIGASEDKLIPADNEKGFDVASVMSVTLSCDHRVVDGAVGAQWLAEFKKYLEKPITMLL.

Residues 1-85 (MWRVCVRRAQ…LLGSPGRRSY (85 aa)) constitute a mitochondrion transit peptide. The disordered stretch occupies residues 80–100 (PGRRSYSLPPHQKVPLPSLSP). Positions 90–166 (HQKVPLPSLS…PIGSIICITV (77 aa)) constitute a Lipoyl-binding 1 domain. At Ser-99 the chain carries Phosphoserine. Lys-131 bears the N6-lipoyllysine mark. 2 disordered regions span residues 189–219 (QAAA…PPHM) and 307–340 (LKPQ…PAGP). Residues 201–211 (AAPTAPSAKAP) show a composition bias toward low complexity. Positions 218-287 (HMQVSAVGEQ…PLGAPLCIIV (70 aa)) constitute a Lipoyl-binding 2 domain. Positions 310–321 (QAPPPVPPPVAA) are enriched in pro residues. Positions 322–333 (APPTAQPLAPTP) are enriched in low complexity. A Peripheral subunit-binding (PSBD) domain is found at 345–382 (FVSPLAKKLAAERGIDLTQVKGTGPEGRIIKKDIDSFV). A CoA-binding site is contributed by Arg-451. Position 456 is an N6-acetyllysine (Lys-456). N6-succinyllysine is present on Lys-463. Residue Ser-465 participates in CoA binding. Position 537 is an N6-succinyllysine (Lys-537). Residues Ser-556, Asn-557, and Gly-581 each contribute to the CoA site. Residues His-610 and Asp-614 contribute to the active site.

It belongs to the 2-oxoacid dehydrogenase family. As to quaternary structure, part of the pyruvate dehydrogenase complex (PDHc) that is a multi-enzyme complex composed of multiple copies of three enzymes, pyruvate dehydrogenase (subunits PDH1A and PDHB, E1 component), dihydrolipoamide acetyltransferase (DLAT, E2 component), and dihydrolipoamide dehydrogenase (DLD, E3 component) to which is added an additional protein the E3-binding protein (PDHX, E3BP). In terms of structural architecture, the E2 and E3BP components assemble into a 60meric central core with icosahedral symmetry. The central core is decorated with E1 and E3 proteins. Currently, two alternative models for the E2:E3BP stoichiometry are considered as being either 48:12 (E2(48)-E3BP(12)) or 40:20 (E2(40)-E3BP(20)). Interacts with PDK2 and PDK3. Interacts with SIRT4. Interacts with PDHB. Requires (R)-lipoate as cofactor. Delipoylated at Lys-131 by SIRT4, delipoylation decreases the PHD complex activity. As to expression, detected at higher levels in cauda epididymal spermatazoa than in caput epididymal spermatazoa (at protein level).

The protein resides in the mitochondrion matrix. The catalysed reaction is N(6)-[(R)-dihydrolipoyl]-L-lysyl-[protein] + acetyl-CoA = N(6)-[(R)-S(8)-acetyldihydrolipoyl]-L-lysyl-[protein] + CoA. In terms of biological role, as part of the pyruvate dehydrogenase complex, catalyzes the transfers of an acetyl group to a lipoic acid moiety. The pyruvate dehydrogenase complex, catalyzes the overall conversion of pyruvate to acetyl-CoA and CO(2), and thereby links cytoplasmic glycolysis and the mitochondrial tricarboxylic acid (TCA) cycle. In Mesocricetus auratus (Golden hamster), this protein is Dihydrolipoyllysine-residue acetyltransferase component of pyruvate dehydrogenase complex, mitochondrial.